The chain runs to 263 residues: uncharacterized protein (263 aa).

One can recognise a GST N-terminal domain in the interval 44–131 (QVYSLGTPNG…YLADKFNHLI (88 aa)). Positions 134–263 (DWAQRTEVLN…ALEVDYKAIK (130 aa)) constitute a GST C-terminal domain.

This sequence belongs to the GST superfamily. In terms of assembly, homodimer.

This is an uncharacterized protein from Streptococcus mutans serotype c (strain ATCC 700610 / UA159).